A 297-amino-acid polypeptide reads, in one-letter code: Translocase of chloroplast 33, chloroplastic (297 aa).

Residues 34 to 258 (MNSMTVLVLG…HVDKKMVDGS (225 aa)) form the AIG1-type G domain. Residues 37–53 (MTVLVLGKGGVGKSSTV) traverse the membrane as a helical segment. GTP is bound by residues 46 to 51 (GVGKSS) and 65 to 70 (SPFQAE). Mg(2+)-binding residues include Ser-50 and Gln-68. 2 homodimerization regions span residues 65–68 (SPFQ) and 125–130 (RLDVYR). His-160 provides a ligand contact to GTP. Ser-181 is modified (phosphoserine). 208–209 (EN) contributes to the GTP binding site.

Belongs to the TRAFAC class TrmE-Era-EngA-EngB-Septin-like GTPase superfamily. AIG1/Toc34/Toc159-like paraseptin GTPase family. TOC34 subfamily. In terms of assembly, homodimer, heterodimer with TOC34 and TOC159, and monomer. The homodimerization and the dimerization with TOC159 require the binding of GTP on Arg-130, and a hypothetical coGAP factor. The dimeric form has a higher GTPase activity than the monomeric form. Part of the TOC core complex that includes 1 protein for the specific recognition of transit peptides surrounded by a ring composed of four proteins forming translocation channels, and four to five GTP-binding proteins providing energy. This core complex can interact with components of the TIC complex to form a larger import complex. Chloroplastic protein precursor such as prSS (precursor of the RuBisCO small subunit) interacts with these complexes. The TOC complex contains a specific subset of polar lipids such as digalactosyldiacylglyceride (DGDG), phosphatidylcholine (PC) and phosphatidylglycerol (PG). Interacts at least with TOC75-3. Forms large complexes including TOC33, pPORA and OEP161 during pPORA import into plastids at the plastid envelope membrane. Interacts with SP1. It depends on Mg(2+) as a cofactor. Post-translationally, phosphorylated by a kinase present in the outer envelope of chloroplast. When Ser-181 is phosphorylated, the binding to preprotein, GTP and GDP is inhibited, and thus, GTPase activity is repressed. Mostly expressed in seedlings and flowers, and, to a lower extent, in roots, stems, and leaves.

The protein resides in the plastid. The protein localises to the chloroplast outer membrane. In terms of biological role, GTPase involved in protein precursor import into chloroplasts. Seems to recognize chloroplast-destined precursor proteins and regulate their presentation to the translocation channel through GTP hydrolysis. Binds GTP, GDP, XTP, but not ATP. Probably specialized in the import of nuclear encoded photosynthetic preproteins from the cytoplasm to the chloroplast, especially during early development stages. This Arabidopsis thaliana (Mouse-ear cress) protein is Translocase of chloroplast 33, chloroplastic (TOC33).